The sequence spans 472 residues: Tryptophanase (472 aa).

At Lys270 the chain carries N6-(pyridoxal phosphate)lysine.

The protein belongs to the beta-eliminating lyase family. As to quaternary structure, homotetramer. It depends on pyridoxal 5'-phosphate as a cofactor.

The enzyme catalyses L-tryptophan + H2O = indole + pyruvate + NH4(+). Its pathway is amino-acid degradation; L-tryptophan degradation via pyruvate pathway; indole and pyruvate from L-tryptophan: step 1/1. This is Tryptophanase (tnaA) from Vibrio cholerae serotype O1 (strain ATCC 39315 / El Tor Inaba N16961).